Consider the following 161-residue polypeptide: Eukaryotic translation initiation factor 5A-2 (161 aa).

Position 54 is a hypusine (Lys-54).

Belongs to the eIF-5A family. Lys-54 undergoes hypusination, a unique post-translational modification that consists in the addition of a butylamino group from spermidine to lysine side chain and leads to the formation of a hypusine residue. eIF-5As are the only known proteins to undergo this modification, which is essential for their function. Expressed in the somatic tissues.

Its subcellular location is the cytoplasm. Translation factor that promotes translation elongation and termination, particularly upon ribosome stalling at specific amino acid sequence contexts. Binds between the exit (E) and peptidyl (P) site of the ribosome and promotes rescue of stalled ribosome: specifically required for efficient translation of polyproline-containing peptides as well as other motifs that stall the ribosome. Acts as a ribosome quality control (RQC) cofactor by joining the RQC complex to facilitate peptidyl transfer during CAT tailing step. Acts in somatic tissues and its function in the soma is essential for normal growth and reproduction. The polypeptide is Eukaryotic translation initiation factor 5A-2 (iff-2) (Caenorhabditis elegans).